Reading from the N-terminus, the 207-residue chain is Serotonin N-acetyltransferase (207 aa).

Threonine 31 carries the phosphothreonine; by PKA modification. The region spanning 35–196 is the N-acetyltransferase domain; that stretch reads NEFRCLTPKD…TFTEMHCSLR (162 aa). Position 124 (leucine 124) interacts with substrate. Acetyl-CoA contacts are provided by residues 124-126 and 132-137; these read LAV and QQGKGS. Methionine 159 contacts substrate. An acetyl-CoA-binding site is contributed by 168–170; it reads YQR. Position 205 is a phosphoserine (serine 205).

Belongs to the acetyltransferase family. AANAT subfamily. Monomer. Interacts with several 14-3-3 proteins, including YWHAB, YWHAE, YWHAG and YWHAZ, preferentially when phosphorylated at Thr-31. Phosphorylation on Ser-205 also allows binding to YWHAZ, but with lower affinity. The interaction with YWHAZ considerably increases affinity for arylalkylamines and acetyl-CoA and protects the enzyme from dephosphorylation and proteasomal degradation. It may also prevent thiol-dependent inactivation. In terms of processing, cAMP-dependent phosphorylation on both N-terminal Thr-31 and C-terminal Ser-205 regulates AANAT activity by promoting interaction with 14-3-3 proteins. As to expression, high levels in pineal gland and retina.

It is found in the cytoplasm. It carries out the reaction a 2-arylethylamine + acetyl-CoA = an N-acetyl-2-arylethylamine + CoA + H(+). It participates in aromatic compound metabolism; melatonin biosynthesis; melatonin from serotonin: step 1/2. Controls the night/day rhythm of melatonin production in the pineal gland. Catalyzes the N-acetylation of serotonin into N-acetylserotonin, the penultimate step in the synthesis of melatonin. The polypeptide is Serotonin N-acetyltransferase (AANAT) (Bos taurus (Bovine)).